The following is a 624-amino-acid chain: Probable Xaa-Pro aminopeptidase P (624 aa).

Residues D414, D425, E530, and E544 each coordinate Mn(2+).

This sequence belongs to the peptidase M24B family. It depends on Mn(2+) as a cofactor.

It carries out the reaction Release of any N-terminal amino acid, including proline, that is linked to proline, even from a dipeptide or tripeptide.. Functionally, catalyzes the removal of a penultimate prolyl residue from the N-termini of peptides. This Chaetomium globosum (strain ATCC 6205 / CBS 148.51 / DSM 1962 / NBRC 6347 / NRRL 1970) (Soil fungus) protein is Probable Xaa-Pro aminopeptidase P (AMPP).